Reading from the N-terminus, the 234-residue chain is Transcriptional activator protein TraR (234 aa).

The region spanning 167–232 is the HTH luxR-type domain; it reads TAEDAAWLDP…HLTALAIRRK (66 aa). Positions 191-210 form a DNA-binding region, H-T-H motif; that stretch reads MEEIADVEGVKYNSVRVKLR.

The protein belongs to the autoinducer-regulated transcriptional regulatory protein family.

Functionally, positive regulation of conjugal transfer of Ti plasmids. TraR activates target genes in the presence of AAI and also activates traR and traI themselves. The chain is Transcriptional activator protein TraR (traR) from Rhizobium radiobacter (Agrobacterium tumefaciens).